A 328-amino-acid polypeptide reads, in one-letter code: tRNA uridine(34) hydroxylase (328 aa).

The Rhodanese domain occupies 130-224 (LDEDTVVLDT…YGKDPEVQGE (95 aa)). Catalysis depends on cysteine 184, which acts as the Cysteine persulfide intermediate.

Belongs to the TrhO family.

It catalyses the reaction uridine(34) in tRNA + AH2 + O2 = 5-hydroxyuridine(34) in tRNA + A + H2O. Its function is as follows. Catalyzes oxygen-dependent 5-hydroxyuridine (ho5U) modification at position 34 in tRNAs. The polypeptide is tRNA uridine(34) hydroxylase (Streptococcus pyogenes serotype M49 (strain NZ131)).